Here is a 1385-residue protein sequence, read N- to C-terminus: L-2-aminoadipate reductase large subunit (1385 aa).

One can recognise a Carrier domain in the interval 843–920; sequence SSFSPLEQEI…ELAKEISRVR (78 aa). S880 is subject to O-(pantetheine 4'-phosphoryl)serine.

This sequence belongs to the ATP-dependent AMP-binding enzyme family. Heterodimer of an alpha and a beta subunit. Requires pantetheine 4'-phosphate as cofactor.

The enzyme catalyses (S)-2-amino-6-oxohexanoate + NADP(+) + H2O = L-2-aminoadipate + NADPH + 2 H(+). It carries out the reaction (S)-2-amino-6-oxohexanoate + NAD(+) + H2O = L-2-aminoadipate + NADH + 2 H(+). The catalysed reaction is (S)-2-amino-6-oxohexanoate + AMP + diphosphate + NADP(+) = L-2-aminoadipate + ATP + NADPH + H(+). The protein operates within amino-acid biosynthesis; L-lysine biosynthesis via AAA pathway; L-lysine from L-alpha-aminoadipate (fungal route): step 1/3. Its function is as follows. Catalyzes the activation of alpha-aminoadipate by ATP-dependent adenylation and the reduction of activated alpha-aminoadipate by NADPH. The activated alpha-aminoadipate is bound to the phosphopantheinyl group of the enzyme itself before it is reduced to (S)-2-amino-6-oxohexanoate. The protein is L-2-aminoadipate reductase large subunit (LYS2) of Eremothecium gossypii (strain ATCC 10895 / CBS 109.51 / FGSC 9923 / NRRL Y-1056) (Yeast).